Consider the following 534-residue polypeptide: MYTNYSLTSSDAMPRTYLVGTASPEMSKKKRQSANCDKPTRRVIHIIDTNEHSEVDLKNELPITCTNEDGEMTSSSWTSQTANDFLKLAYVNAKLDPSLPSQYFKQDIINVLQSLEIPGWSVPGSKESSLNKNLLTLTQIKGALTNVIYKIHYPNLPPLLMRIFGDSIDSVIDREYELKVIARLSFYDLGPKLEGFFENGRFEKYIEGSRTSTQADFIDRDTSIKIAKKLKELHCTVPLTHKEITDQPSCWTTFDQWIKLIDSHKEWVSNNVNISENLRCSSWNFFLKSFKNYKRWLYNDSAFTSKLLREDDKDSMINSGLKMVFCHNDLQHGNLLFKSKGKDDISVGDLTIIDFEYAGPNPVVFDLSNHLNEWMQDYNDVQSFKSHIDKYPKEEDILVFAQSYINHMNENHVKIASQEVRILYNLIIEWRPCTQLFWCLWALLQSGRLPQRPLIEGEKLMSEKAGLGDETHLMEHKNKENGKYDCSEDDSFNYLGFCKEKMSVFWGDLITLGVIDKDCPDIGKTDYLDTKLIF.

Serine 23 carries the post-translational modification Phosphoserine.

This sequence belongs to the choline/ethanolamine kinase family.

It localises to the cytoplasm. The catalysed reaction is ethanolamine + ATP = phosphoethanolamine + ADP + H(+). The enzyme catalyses choline + ATP = phosphocholine + ADP + H(+). It functions in the pathway phospholipid metabolism; phosphatidylethanolamine biosynthesis; phosphatidylethanolamine from ethanolamine: step 1/3. Catalyzes the committed step of phosphatidylethanolamine synthesis via the CDP-ethanolamine branch of the Kennedy pathway. Also exhibits choline kinase activity, thus contributing to phosphatidylcholine synthesis via the CDP-choline pathway, but its preferred substrate is ethanolamine. The sequence is that of Ethanolamine kinase (EKI1) from Saccharomyces cerevisiae (strain ATCC 204508 / S288c) (Baker's yeast).